We begin with the raw amino-acid sequence, 179 residues long: Replication restart protein DnaT (179 aa).

The tract at residues M1 to A83 is required for trimerization and to bind PriB. Residues V84–G179 form a binds ssDNA region. Positions S151–G179 are disordered. Basic and acidic residues predominate over residues P159–I173.

This sequence belongs to the DnaT family. In terms of assembly, homotrimer. Interacts with PriB. Interacts with PriC. Component of the replication restart primosome. Primosome assembly occurs via a 'hand-off' mechanism. PriA binds to replication forks, subsequently PriB then DnaT bind; DnaT then displaces ssDNA to generate the helicase loading substrate.

Functionally, involved in the restart of stalled replication forks, which reloads the replicative helicase on sites other than the origin of replication. Can function in multiple replication restart pathways. Displaces ssDNA from a PriB-ssDNA complex. Probably forms a spiral filament on ssDNA. Binds single-stranded (ss)DNA. The minimal binding site is about 26 +/- 2 nucleotides (nt) per trimer. Two DNA-protein complexes are seen with 55 nt-long ssDNA. In Klebsiella pneumoniae subsp. pneumoniae (strain ATCC 700721 / MGH 78578), this protein is Replication restart protein DnaT.